A 599-amino-acid polypeptide reads, in one-letter code: Aspartate--tRNA(Asp/Asn) ligase (599 aa).

Residue E180 coordinates L-aspartate. The tract at residues 204-207 is aspartate; it reads QLLK. An L-aspartate-binding site is contributed by R226. ATP is bound by residues 226 to 228 and Q235; that span reads RDE. Residue H457 coordinates L-aspartate. ATP is bound at residue E491. R498 serves as a coordination point for L-aspartate. 543–546 lines the ATP pocket; that stretch reads GWDR. The segment at 565–599 is disordered; sequence KAGGGRDPLTGAPAPISDEQRAETGVDYDPDADEN. Positions 590-599 are enriched in acidic residues; the sequence is VDYDPDADEN.

This sequence belongs to the class-II aminoacyl-tRNA synthetase family. Type 1 subfamily. In terms of assembly, homodimer.

It is found in the cytoplasm. It carries out the reaction tRNA(Asx) + L-aspartate + ATP = L-aspartyl-tRNA(Asx) + AMP + diphosphate. Aspartyl-tRNA synthetase with relaxed tRNA specificity since it is able to aspartylate not only its cognate tRNA(Asp) but also tRNA(Asn). Reaction proceeds in two steps: L-aspartate is first activated by ATP to form Asp-AMP and then transferred to the acceptor end of tRNA(Asp/Asn). This is Aspartate--tRNA(Asp/Asn) ligase from Bifidobacterium longum (strain NCC 2705).